The primary structure comprises 33 residues: Pardaxin P-4 (33 aa).

This sequence belongs to the pardaxin family. As to quaternary structure, monomer. In aqueous solution exists as a tetramer.

The protein localises to the secreted. The protein resides in the target cell membrane. Its function is as follows. Exhibits unusual shark repellent and surfactant properties. Forms voltage-dependent, ion-permeable channels in membranes. At high concentration causes cell membrane lysis. The chain is Pardaxin P-4 from Pardachirus marmoratus (Finless sole).